Consider the following 657-residue polypeptide: N-acetylgalactosaminyltransferase 7 (657 aa).

Residues 1–6 (MRLKIG) lie on the Cytoplasmic side of the membrane. A helical; Signal-anchor for type II membrane protein transmembrane segment spans residues 7 to 29 (FILRSLLVVGSFLGLVVLWSSLS). Disordered regions lie at residues 30–66 (SRPD…DDRF) and 83–105 (ESIR…DSQR). Topologically, residues 30–657 (SRPDDQSPLS…KWEMNNIHSV (628 aa)) are lumenal. Cystine bridges form between Cys197-Cys435, Cys426-Cys507, Cys545-Cys562, Cys585-Cys600, and Cys625-Cys640. Residues 206–317 (LLTSSVVIVF…VNWYAPLVAP (112 aa)) form a catalytic subdomain A region. Positions 247 and 277 each coordinate substrate. Asp301 and His303 together coordinate Mn(2+). The tract at residues 381 to 443 (PYRSPAMAGG…PCSRVGHIYR (63 aa)) is catalytic subdomain B. Trp412 provides a ligand contact to substrate. Residue His440 participates in Mn(2+) binding. Arg443 lines the substrate pocket. The Ricin B-type lectin domain occupies 532-652 (VEWGEIRGLE…SKMTQKWEMN (121 aa)).

Belongs to the glycosyltransferase 2 family. GalNAc-T subfamily. The cofactor is Mn(2+). In terms of tissue distribution, highly expressed in sublingual gland. Expressed at lower level in stomach, small intestiine and colon.

It is found in the golgi apparatus membrane. It catalyses the reaction L-seryl-[protein] + UDP-N-acetyl-alpha-D-galactosamine = a 3-O-[N-acetyl-alpha-D-galactosaminyl]-L-seryl-[protein] + UDP + H(+). The catalysed reaction is L-threonyl-[protein] + UDP-N-acetyl-alpha-D-galactosamine = a 3-O-[N-acetyl-alpha-D-galactosaminyl]-L-threonyl-[protein] + UDP + H(+). Its pathway is protein modification; protein glycosylation. Glycopeptide transferase involved in O-linked oligosaccharide biosynthesis, which catalyzes the transfer of an N-acetyl-D-galactosamine residue to an already glycosylated peptide. In contrast to other proteins of the family, it does not act as a peptide transferase that transfers GalNAc onto serine or threonine residue on the protein receptor, but instead requires the prior addition of a GalNAc on a peptide before adding additional GalNAc moieties. Some peptide transferase activity is however not excluded, considering that its appropriate peptide substrate may remain unidentified. This chain is N-acetylgalactosaminyltransferase 7 (Galnt7), found in Mus musculus (Mouse).